We begin with the raw amino-acid sequence, 727 residues long: Glucans biosynthesis glucosyltransferase H (727 aa).

Residues 18–38 (SAMPNERPGAMEPQNLSKMPE) form a disordered region. 7 helical membrane passes run 58-78 (FLVV…MGAV), 97-117 (VNFC…LILL), 278-298 (LQQF…GWWV), 408-428 (IMAY…LMLA), 460-480 (LFYI…LLLL), 496-516 (IFSV…MMFI), and 572-592 (LLAW…ISAW).

It belongs to the glycosyltransferase 2 family. OpgH subfamily.

It localises to the cell inner membrane. Its pathway is glycan metabolism; osmoregulated periplasmic glucan (OPG) biosynthesis. In terms of biological role, involved in the biosynthesis of osmoregulated periplasmic glucans (OPGs). This is Glucans biosynthesis glucosyltransferase H from Shewanella baltica (strain OS185).